Reading from the N-terminus, the 105-residue chain is Cell division protein FtsL (105 aa).

Residues 1-24 (MAEKMEKTGQILQMQLKRFSRVEK) are Cytoplasmic-facing. Residues 25-45 (AFYFSIAVTTLIVAISIIFMQ) form a helical membrane-spanning segment. The Extracellular portion of the chain corresponds to 46 to 105 (TKLLQVQNDLTKINAQIEEKKTELDDAKQEVNELLRAERLKEIANSHDLQLNNENIRIAE).

This sequence belongs to the FtsL family.

The protein localises to the cell membrane. Its function is as follows. Essential cell division protein. In Streptococcus pneumoniae (strain ATCC BAA-255 / R6), this protein is Cell division protein FtsL.